Here is a 329-residue protein sequence, read N- to C-terminus: Gibberellin 2-beta-dioxygenase 1 (329 aa).

One can recognise a Fe2OG dioxygenase domain in the interval 165-273 (NTDSILRLNH…RVSMIYFAGP (109 aa)). Residues H197, D199, and H254 each contribute to the Fe cation site. The active site involves R264. Position 264 (R264) interacts with 2-oxoglutarate.

The protein belongs to the iron/ascorbate-dependent oxidoreductase family. GA2OX subfamily. Fe(2+) is required as a cofactor. As to expression, preferentially expressed in flowers, siliques, and upper stems. Not expressed in the apex.

It catalyses the reaction gibberellin A1 + 2-oxoglutarate + O2 = gibberellin A8 + succinate + CO2. Its pathway is plant hormone biosynthesis; gibberellin biosynthesis. Catalyzes the 2-beta-hydroxylation of several biologically active gibberellins, leading to the homeostatic regulation of their endogenous level. Catabolism of gibberellins (GAs) plays a central role in plant development. Converts GA9/GA20 to GA51/GA29 and GA4/GA1 to GA34/GA8. This Arabidopsis thaliana (Mouse-ear cress) protein is Gibberellin 2-beta-dioxygenase 1 (GA2OX1).